The sequence spans 333 residues: Acetoin:2,6-dichlorophenolindophenol oxidoreductase subunit alpha (333 aa).

As to quaternary structure, tetramer of 2 alpha and 2 beta subunits. Requires thiamine diphosphate as cofactor.

The protein operates within ketone degradation; acetoin degradation. Its function is as follows. Catalyzes the 2,6-dichlorophenolindophenol-dependent cleavage of acetoin into acetate and acetaldehyde. The alpha subunit is probably the catalytic subunit of the enzyme. The polypeptide is Acetoin:2,6-dichlorophenolindophenol oxidoreductase subunit alpha (acoA) (Bacillus subtilis (strain 168)).